Reading from the N-terminus, the 617-residue chain is ATP-dependent RNA helicase DBP1 (617 aa).

Residues 1–90 (MADLPQKVSN…TSANYNRGGS (90 aa)) form a disordered region. A compositionally biased stretch (polar residues) spans 7 to 17 (KVSNLSINNKE). Residues 38–58 (PSFERSTPKQEDKVTGGDFFR) show a composition bias toward basic and acidic residues. Over residues 79–90 (GGTSANYNRGGS) the composition is skewed to polar residues. A Q motif motif is present at residues 154 to 182 (LDFSSPPLDELLMENIKLASFTKPTPVQK). The Helicase ATP-binding domain occupies 185-374 (IPIVTKGRDL…RDFLDNYIFL (190 aa)). An ATP-binding site is contributed by 198–205 (AQTGSGKT). The DEAD box motif lies at 318-321 (DEAD). Residues 385 to 545 (NITQRILYVD…EVPTFLSDLS (161 aa)) form the Helicase C-terminal domain. The tract at residues 542 to 617 (SDLSRQNSRG…GYGNSNASWW (76 aa)) is disordered. The span at 580–594 (FGSTRPRNTGTSNWG) shows a compositional bias: polar residues.

This sequence belongs to the DEAD box helicase family. DDX3/DED1 subfamily.

Its subcellular location is the cytoplasm. The enzyme catalyses ATP + H2O = ADP + phosphate + H(+). ATP-binding RNA helicase involved in translation initiation. Remodels RNA in response to ADP and ATP concentrations by facilitating disruption, but also formation of RNA duplexes. Redundant to DED1, may be required in conditions in which DED1 expression is decreased. The chain is ATP-dependent RNA helicase DBP1 (DBP1) from Saccharomyces cerevisiae (strain YJM789) (Baker's yeast).